A 226-amino-acid chain; its full sequence is Small ribosomal subunit protein uS5 (226 aa).

Positions 1–18 (MAAPQRSRTTGAPSSGGP) are enriched in polar residues. The segment at 1-45 (MAAPQRSRTTGAPSSGGPSENERGRGGDRRGGDRRGGDRRGGDDR) is disordered. Basic and acidic residues predominate over residues 20-45 (ENERGRGGDRRGGDRRGGDRRGGDDR). The region spanning 48 to 111 (FVERVVTINR…EEAKKNFFRV (64 aa)) is the S5 DRBM domain.

The protein belongs to the universal ribosomal protein uS5 family. As to quaternary structure, part of the 30S ribosomal subunit. Contacts proteins S4 and S8.

Its function is as follows. With S4 and S12 plays an important role in translational accuracy. In terms of biological role, located at the back of the 30S subunit body where it stabilizes the conformation of the head with respect to the body. The protein is Small ribosomal subunit protein uS5 of Beutenbergia cavernae (strain ATCC BAA-8 / DSM 12333 / CCUG 43141 / JCM 11478 / NBRC 16432 / NCIMB 13614 / HKI 0122).